A 227-amino-acid chain; its full sequence is Large ribosomal subunit protein uL3 (227 aa).

The disordered stretch occupies residues 144–166 (RRGPMAHGSKNHRLPGSTGPGTT).

This sequence belongs to the universal ribosomal protein uL3 family. In terms of assembly, part of the 50S ribosomal subunit. Forms a cluster with proteins L14 and L19.

Functionally, one of the primary rRNA binding proteins, it binds directly near the 3'-end of the 23S rRNA, where it nucleates assembly of the 50S subunit. In Trichodesmium erythraeum (strain IMS101), this protein is Large ribosomal subunit protein uL3.